Reading from the N-terminus, the 950-residue chain is Inactive atromentin synthetase invA4 (950 aa).

The adenylation (A) domain stretch occupies residues 37–460; sequence SRAVSQYPNH…SGRIKDTVVV (424 aa). The region spanning 592-670 is the Carrier domain; sequence APSTETEKTL…TLAKYVDSLV (79 aa). A thiolation and peptide carrier (T) domain region spans residues 597–667; it reads TEKTLAGIYA…EIITLAKYVD (71 aa). O-(pantetheine 4'-phosphoryl)serine is present on S629. Positions 693–797 are thioesterase (TE) domain; sequence PIFMVHPGIG…GIIDMIPHHM (105 aa).

It belongs to the ATP-dependent AMP-binding enzyme family.

Functionally, inactive atromentin synthetase homolog. Does not accept 4-hydroxyphenylpyruvate (4-HPP) as substrate. This Paxillus involutus (Naked brimcap) protein is Inactive atromentin synthetase invA4 (invA4).